The sequence spans 263 residues: Small ribosomal subunit protein bS1c (263 aa).

S1 motif domains are found at residues 27 to 96 (GDIV…LSIR), 114 to 178 (DSLL…LSHR), and 192 to 260 (GNII…LSMK).

This sequence belongs to the bacterial ribosomal protein bS1 family.

It is found in the plastid. Its subcellular location is the chloroplast. This Pyropia yezoensis (Susabi-nori) protein is Small ribosomal subunit protein bS1c (rps1).